The sequence spans 294 residues: Undecaprenyl-diphosphatase (294 aa).

Helical transmembrane passes span 39 to 59 (PGAAFTAIIQIGTELAVILYF), 93 to 113 (ATLGWNIIVGSIPIIILGFTL), 123 to 143 (NLWITVTVLLVFGILLWMVDA), 198 to 218 (SFLMAIPAVFGSGLLEAIKAV), 232 to 252 (PTLVAMVISFVLGYIVIIGFL), and 268 to 288 (IGLAVVVALLLIVGVLPAIDP).

Belongs to the UppP family.

The protein resides in the cell membrane. It catalyses the reaction di-trans,octa-cis-undecaprenyl diphosphate + H2O = di-trans,octa-cis-undecaprenyl phosphate + phosphate + H(+). Its function is as follows. Catalyzes the dephosphorylation of undecaprenyl diphosphate (UPP). Confers resistance to bacitracin. The protein is Undecaprenyl-diphosphatase of Bifidobacterium longum (strain DJO10A).